A 492-amino-acid polypeptide reads, in one-letter code: Putative transporter SVOPL (492 aa).

Transmembrane regions (helical) follow at residues 48–68, 86–106, 121–141, 179–199, 203–223, 281–301, 348–368, 383–403, 429–449, and 458–478; these read IALF…IMLI, VALV…LFGL, FLWG…IWFV, VFWL…IPTI, WLIR…KFIP, TLQI…VILA, IIST…INFL, LFFL…FLFM, ALGM…APFI, and ILGA…SAFT.

This sequence belongs to the major facilitator superfamily.

The protein localises to the membrane. This Homo sapiens (Human) protein is Putative transporter SVOPL (SVOPL).